A 334-amino-acid chain; its full sequence is Glycerol-1-phosphate dehydrogenase [NAD(P)+] (334 aa).

NAD(+)-binding positions include 77–81 (GRPID) and 99–102 (TTAS). A substrate-binding site is contributed by Asp104. Ser108 contributes to the NAD(+) binding site. Asp147 provides a ligand contact to substrate. Residues Asp147 and His225 each contribute to the Zn(2+) site. His229 is a substrate binding site. His246 is a Zn(2+) binding site.

Belongs to the glycerol-1-phosphate dehydrogenase family. Zn(2+) serves as cofactor.

Its subcellular location is the cytoplasm. The catalysed reaction is sn-glycerol 1-phosphate + NAD(+) = dihydroxyacetone phosphate + NADH + H(+). It carries out the reaction sn-glycerol 1-phosphate + NADP(+) = dihydroxyacetone phosphate + NADPH + H(+). It participates in membrane lipid metabolism; glycerophospholipid metabolism. In terms of biological role, catalyzes the NAD(P)H-dependent reduction of dihydroxyacetonephosphate (DHAP or glycerone phosphate) to glycerol 1-phosphate (G1P). The G1P thus generated is used as the glycerophosphate backbone of phospholipids in the cellular membranes of Archaea. This chain is Glycerol-1-phosphate dehydrogenase [NAD(P)+], found in Methanococcus maripaludis (strain C6 / ATCC BAA-1332).